The primary structure comprises 381 residues: Diguanylate cyclase DosC (381 aa).

Heme is bound at residue H98. Residues T325 to S381 form the GGDEF domain. A Mg(2+)-binding site is contributed by D333. Substrate contacts are provided by N341 and D350.

Requires heme as cofactor. Mg(2+) is required as a cofactor.

It catalyses the reaction 2 GTP = 3',3'-c-di-GMP + 2 diphosphate. It functions in the pathway purine metabolism; 3',5'-cyclic di-GMP biosynthesis. In terms of biological role, globin-coupled heme-based oxygen sensor protein displaying diguanylate cyclase (DGC) activity in response to oxygen availability. Thus, catalyzes the synthesis of cyclic diguanylate (c-di-GMP) via the condensation of 2 GTP molecules. Cyclic-di-GMP is a second messenger which controls cell surface-associated traits in bacteria. This Shigella flexneri protein is Diguanylate cyclase DosC (dosC).